Reading from the N-terminus, the 317-residue chain is Cytochrome f (317 aa).

Residues 1 to 34 form the signal peptide; sequence MINFKKQIMKKTTFFLCAMLLVSSILIAPRSSLA. The heme site is built by Tyr-35, Cys-55, Cys-58, and His-59. A helical transmembrane segment spans residues 284–304; sequence IIGLIAFFIGVGLTQILLVLK.

The protein belongs to the cytochrome f family. As to quaternary structure, the 4 large subunits of the cytochrome b6-f complex are cytochrome b6, subunit IV (17 kDa polypeptide, PetD), cytochrome f and the Rieske protein, while the 4 small subunits are PetG, PetL, PetM and PetN. The complex functions as a dimer. Requires heme as cofactor.

The protein resides in the cellular thylakoid membrane. Component of the cytochrome b6-f complex, which mediates electron transfer between photosystem II (PSII) and photosystem I (PSI), cyclic electron flow around PSI, and state transitions. This chain is Cytochrome f, found in Prochlorococcus marinus (strain MIT 9515).